The sequence spans 211 residues: HTH-type transcriptional regulator AlkX (211 aa).

In terms of domain architecture, HTH tetR-type spans 22–82 (ALLRDSVLDA…GYALRLADRL (61 aa)). Positions 45–64 (TLSDVARAAGISRQTIYNEF) form a DNA-binding region, H-T-H motif.

In terms of assembly, homodimer.

It is found in the cytoplasm. DNA-binding activity may be regulated by fatty acids. In terms of biological role, represses the expression of the alkB-rubAB operon, which encodes the alkane hydroxylase AlkB and the rubredoxins RubA and RubB. Acts by binding to the promoter region of the operon. In addition, EMSA analysis show that AlkX can bind to the promoter region of mmpS1 and mmpL3 and to the intragenic region of mmpL11, suggesting that it may participate in the regulatory network that controls the expression of MmpL lipid transporters. This Mycobacterium tuberculosis (strain ATCC 25618 / H37Rv) protein is HTH-type transcriptional regulator AlkX.